A 148-amino-acid polypeptide reads, in one-letter code: C-C motif chemokine 2 (148 aa).

A signal peptide spans 1–23; it reads MQVPVMLLGLLFTVAGWSIHVLA. At Gln24 the chain carries Pyrrolidone carboxylic acid. 2 disulfide bridges follow: Cys34–Cys59 and Cys35–Cys75. Asn126 is a glycosylation site (N-linked (GlcNAc...) asparagine).

This sequence belongs to the intercrine beta (chemokine CC) family. As to quaternary structure, monomer or homodimer; in equilibrium. Is tethered on endothelial cells by glycosaminoglycan (GAG) side chains of proteoglycans. Interacts with TNFAIP6 (via Link domain). In terms of processing, processing at the N-terminus can regulate receptor and target cell selectivity. Deletion of the N-terminal residue converts it from an activator of basophil to an eosinophil chemoattractant. N-Glycosylated.

The protein resides in the secreted. Functionally, acts as a ligand for C-C chemokine receptor CCR2. Signals through binding and activation of CCR2 and induces a strong chemotactic response and mobilization of intracellular calcium ions. Exhibits a chemotactic activity for monocytes and basophils but not neutrophils or eosinophils. Plays an important role in mediating peripheral nerve injury-induced neuropathic pain. Increases NMDA-mediated synaptic transmission in both dopamine D1 and D2 receptor-containing neurons, which may be caused by MAPK/ERK-dependent phosphorylation of GRIN2B/NMDAR2B. In Mus musculus (Mouse), this protein is C-C motif chemokine 2 (Ccl2).